A 304-amino-acid polypeptide reads, in one-letter code: Light-independent protochlorophyllide reductase iron-sulfur ATP-binding protein (304 aa).

Residues 46–51 (GIGKST) and lysine 75 each bind ATP. Serine 50 is a binding site for Mg(2+). [4Fe-4S] cluster-binding residues include cysteine 131 and cysteine 165. Residues 216-217 (NR) and 240-242 (PDL) each bind ATP.

The protein belongs to the NifH/BchL/ChlL family. In terms of assembly, homodimer. Protochlorophyllide reductase is composed of three subunits; BchL, BchN and BchB. Requires [4Fe-4S] cluster as cofactor.

The enzyme catalyses chlorophyllide a + oxidized 2[4Fe-4S]-[ferredoxin] + 2 ADP + 2 phosphate = protochlorophyllide a + reduced 2[4Fe-4S]-[ferredoxin] + 2 ATP + 2 H2O. It participates in porphyrin-containing compound metabolism; bacteriochlorophyll biosynthesis (light-independent). In terms of biological role, component of the dark-operative protochlorophyllide reductase (DPOR) that uses Mg-ATP and reduced ferredoxin to reduce ring D of protochlorophyllide (Pchlide) to form chlorophyllide a (Chlide). This reaction is light-independent. The L component serves as a unique electron donor to the NB-component of the complex, and binds Mg-ATP. The sequence is that of Light-independent protochlorophyllide reductase iron-sulfur ATP-binding protein from Rhodobacter capsulatus (strain ATCC BAA-309 / NBRC 16581 / SB1003).